The primary structure comprises 75 residues: DNA-directed RNA polymerase subunit omega (75 aa).

The protein belongs to the RNA polymerase subunit omega family. In cyanobacteria the RNAP catalytic core is composed of 2 alpha, 1 beta, 1 beta', 1 gamma and 1 omega subunit. When a sigma factor is associated with the core the holoenzyme is formed, which can initiate transcription.

The catalysed reaction is RNA(n) + a ribonucleoside 5'-triphosphate = RNA(n+1) + diphosphate. Promotes RNA polymerase assembly. Latches the N- and C-terminal regions of the beta' subunit thereby facilitating its interaction with the beta and alpha subunits. This is DNA-directed RNA polymerase subunit omega from Synechococcus sp. (strain CC9311).